Reading from the N-terminus, the 246-residue chain is Carboxylesterase (246 aa).

Ser93 acts as the Nucleophile in catalysis. Active-site charge relay system residues include Asp192 and His222.

Belongs to the lipase/esterase LIP3/BchO family. As to quaternary structure, homodimer.

It catalyses the reaction a carboxylic ester + H2O = an alcohol + a carboxylate + H(+). Functionally, involved in the detoxification of xenobiotics. Shows maximal activity with C6 substrates, with gradually decreasing activity from C8 to C12 substrates. No activity for higher chain length substrates acids rather than long-chain ones. The polypeptide is Carboxylesterase (est) (Geobacillus stearothermophilus (Bacillus stearothermophilus)).